We begin with the raw amino-acid sequence, 235 residues long: Orotidine 5'-phosphate decarboxylase (235 aa).

Substrate-binding positions include Asp12, Lys34, 61–70 (DMKLLDIDNT), Thr116, Arg177, Gln186, and Arg207. The Proton donor role is filled by Lys63.

This sequence belongs to the OMP decarboxylase family. Type 1 subfamily. In terms of assembly, homodimer.

It catalyses the reaction orotidine 5'-phosphate + H(+) = UMP + CO2. It participates in pyrimidine metabolism; UMP biosynthesis via de novo pathway; UMP from orotate: step 2/2. Catalyzes the decarboxylation of orotidine 5'-monophosphate (OMP) to uridine 5'-monophosphate (UMP). This Rhizobium etli (strain CIAT 652) protein is Orotidine 5'-phosphate decarboxylase.